The sequence spans 218 residues: MADTCCSRTCVVAASTLSVCSSDLSCGNQVSSPSACIGSSWQVDDCQETCCEPTCCAPSCCAPAPRLTLICAPVNCESSPCCQPACSSSSPCQQACCVPVCCRPVCCTPVCCRPVCCRPVCCTPVCCRPVCCRPVCCRPVCCRPVCCTPVCCRPMCCEASPCSAPSSCCRPSSSVSLLCRPVCRPTCCVPTFFCQPSCCHPASSVSLLCQPSCSSSAC.

Residues 26–202 (CGNQVSSPSA…FCQPSCCHPA (177 aa)) are 16 X 5 AA repeats of C-C-X(3). A run of 16 repeats spans residues 50-54 (CCEPT), 55-59 (CCAPS), 60-64 (CCAPA), 86-90 (CSSSS), 96-100 (CCVPV), 101-105 (CCRPV), 111-115 (CCRPV), 121-125 (CCTPV), 131-135 (CCRPV), 136-140 (CCRPV), 141-145 (CCRPV), 151-155 (CCRPM), 161-167 (PCSAPSS), 168-172 (CCRPS), 187-191 (CCVPT), and 198-202 (CCHPA).

It belongs to the KRTAP type 10 family. Interacts with hair keratins.

Functionally, in the hair cortex, hair keratin intermediate filaments are embedded in an interfilamentous matrix, consisting of hair keratin-associated proteins (KRTAP), which are essential for the formation of a rigid and resistant hair shaft through their extensive disulfide bond cross-linking with abundant cysteine residues of hair keratins. The matrix proteins include the high-sulfur and high-glycine-tyrosine keratins. The polypeptide is Keratin-associated protein 10-8 (Bos taurus (Bovine)).